We begin with the raw amino-acid sequence, 282 residues long: 4-hydroxybenzoate octaprenyltransferase (282 aa).

The next 9 helical transmembrane spans lie at 17 to 37 (IGIL…NQGF), 40 to 60 (IDLL…GCVI), 90 to 110 (AFIL…KLPI), 113 to 133 (FYFA…KRFF), 135 to 155 (APQL…FIAS), 163 to 183 (FIVL…MYAM), 207 to 227 (LIIA…AINK), 231 to 251 (CFFY…LKLI), and 262 to 282 (AFLV…LALI).

It belongs to the UbiA prenyltransferase family. Requires Mg(2+) as cofactor.

The protein localises to the cell inner membrane. It catalyses the reaction all-trans-octaprenyl diphosphate + 4-hydroxybenzoate = 4-hydroxy-3-(all-trans-octaprenyl)benzoate + diphosphate. It participates in cofactor biosynthesis; ubiquinone biosynthesis. In terms of biological role, catalyzes the prenylation of para-hydroxybenzoate (PHB) with an all-trans polyprenyl group. Mediates the second step in the final reaction sequence of ubiquinone-8 (UQ-8) biosynthesis, which is the condensation of the polyisoprenoid side chain with PHB, generating the first membrane-bound Q intermediate 3-octaprenyl-4-hydroxybenzoate. The sequence is that of 4-hydroxybenzoate octaprenyltransferase from Legionella pneumophila (strain Lens).